A 430-amino-acid polypeptide reads, in one-letter code: Glutamate-1-semialdehyde 2,1-aminomutase (430 aa).

Residue Lys-265 is modified to N6-(pyridoxal phosphate)lysine.

It belongs to the class-III pyridoxal-phosphate-dependent aminotransferase family. HemL subfamily. Homodimer. Pyridoxal 5'-phosphate is required as a cofactor.

It localises to the cytoplasm. The enzyme catalyses (S)-4-amino-5-oxopentanoate = 5-aminolevulinate. It functions in the pathway porphyrin-containing compound metabolism; protoporphyrin-IX biosynthesis; 5-aminolevulinate from L-glutamyl-tRNA(Glu): step 2/2. This is Glutamate-1-semialdehyde 2,1-aminomutase from Helicobacter pylori (strain HPAG1).